The primary structure comprises 437 residues: GTPase HflX (437 aa).

The tract at residues Asp-150–Gln-173 is disordered. A compositionally biased stretch (gly residues) spans Gln-152–Arg-167. The Hflx-type G domain maps to Ala-212–Val-382. GTP-binding positions include Gly-218 to Ser-225, Phe-243 to Asp-247, Asp-265 to Gly-268, Asn-331 to Asp-334, and Ser-360 to Lys-362. Positions 225 and 245 each coordinate Mg(2+).

The protein belongs to the TRAFAC class OBG-HflX-like GTPase superfamily. HflX GTPase family. As to quaternary structure, monomer. Associates with the 50S ribosomal subunit. Requires Mg(2+) as cofactor.

It is found in the cytoplasm. In terms of biological role, GTPase that associates with the 50S ribosomal subunit and may have a role during protein synthesis or ribosome biogenesis. This chain is GTPase HflX, found in Akkermansia muciniphila (strain ATCC BAA-835 / DSM 22959 / JCM 33894 / BCRC 81048 / CCUG 64013 / CIP 107961 / Muc).